Consider the following 1573-residue polypeptide: Pentafunctional AROM polypeptide 1 (1573 aa).

Residues 1–380 (MAEPTKISIL…YEPKASVVSN (380 aa)) form a 3-dehydroquinate synthase region. Residues 44–46 (DTN), 81–84 (ENSK), 112–114 (GGV), and Asp117 each bind NAD(+). Arg128 serves as a coordination point for 7-phospho-2-dehydro-3-deoxy-D-arabino-heptonate. 137-138 (TT) is an NAD(+) binding site. The 7-phospho-2-dehydro-3-deoxy-D-arabino-heptonate site is built by Asp144 and Lys150. Position 159 (Lys159) interacts with NAD(+). Asn160 contributes to the 7-phospho-2-dehydro-3-deoxy-D-arabino-heptonate binding site. NAD(+)-binding positions include 177-180 (FIDT) and Asn188. Glu192 provides a ligand contact to Zn(2+). 7-phospho-2-dehydro-3-deoxy-D-arabino-heptonate contacts are provided by residues 192–195 (EVIK) and Lys246. The Proton acceptor; for 3-dehydroquinate synthase activity role is filled by Glu256. 7-phospho-2-dehydro-3-deoxy-D-arabino-heptonate-binding positions include 260–264 (RNLLN) and His267. His267 contacts Zn(2+). Residue His271 is the Proton acceptor; for 3-dehydroquinate synthase activity of the active site. Positions 283 and 352 each coordinate 7-phospho-2-dehydro-3-deoxy-D-arabino-heptonate. A Zn(2+)-binding site is contributed by His283. The EPSP synthase stretch occupies residues 393–838 (VIPGVPKDLN…WDALKQKFGV (446 aa)). Cys820 serves as the catalytic For EPSP synthase activity. Residues 859–1051 (DASIVIIGMR…RRKRLSFFMS (193 aa)) are shikimate kinase. 866 to 873 (GMRGAGKT) contributes to the ATP binding site. Residues 1052-1273 (LTLTDLRDSG…AAPGQLSAAE (222 aa)) form a 3-dehydroquinase region. Catalysis depends on His1175, which acts as the Proton acceptor; for 3-dehydroquinate dehydratase activity. Residue Lys1203 is the Schiff-base intermediate with substrate; for 3-dehydroquinate dehydratase activity of the active site. The shikimate dehydrogenase stretch occupies residues 1286-1573 (AKKFAIFGKP…NAVLGTDETK (288 aa)).

This sequence in the N-terminal section; belongs to the sugar phosphate cyclases superfamily. Dehydroquinate synthase family. The protein in the 2nd section; belongs to the EPSP synthase family. In the 3rd section; belongs to the shikimate kinase family. It in the 4th section; belongs to the type-I 3-dehydroquinase family. This sequence in the C-terminal section; belongs to the shikimate dehydrogenase family. As to quaternary structure, homodimer. Zn(2+) is required as a cofactor.

It localises to the cytoplasm. The catalysed reaction is 7-phospho-2-dehydro-3-deoxy-D-arabino-heptonate = 3-dehydroquinate + phosphate. It carries out the reaction 3-dehydroquinate = 3-dehydroshikimate + H2O. The enzyme catalyses shikimate + NADP(+) = 3-dehydroshikimate + NADPH + H(+). It catalyses the reaction shikimate + ATP = 3-phosphoshikimate + ADP + H(+). The catalysed reaction is 3-phosphoshikimate + phosphoenolpyruvate = 5-O-(1-carboxyvinyl)-3-phosphoshikimate + phosphate. The protein operates within metabolic intermediate biosynthesis; chorismate biosynthesis; chorismate from D-erythrose 4-phosphate and phosphoenolpyruvate: step 2/7. It participates in metabolic intermediate biosynthesis; chorismate biosynthesis; chorismate from D-erythrose 4-phosphate and phosphoenolpyruvate: step 3/7. Its pathway is metabolic intermediate biosynthesis; chorismate biosynthesis; chorismate from D-erythrose 4-phosphate and phosphoenolpyruvate: step 4/7. It functions in the pathway metabolic intermediate biosynthesis; chorismate biosynthesis; chorismate from D-erythrose 4-phosphate and phosphoenolpyruvate: step 5/7. The protein operates within metabolic intermediate biosynthesis; chorismate biosynthesis; chorismate from D-erythrose 4-phosphate and phosphoenolpyruvate: step 6/7. The AROM polypeptide catalyzes 5 consecutive enzymatic reactions in prechorismate polyaromatic amino acid biosynthesis. The chain is Pentafunctional AROM polypeptide 1 from Talaromyces marneffei (strain ATCC 18224 / CBS 334.59 / QM 7333) (Penicillium marneffei).